A 1534-amino-acid chain; its full sequence is Alpha-2-macroglobulin homolog (1534 aa).

Residues 1–38 (MDTQRFQSQFHWHLSFKFSGAIAACLSLSLVGTGLANA) form the signal peptide.

This sequence belongs to the protease inhibitor I39 (alpha-2-macroglobulin) family. Bacterial alpha-2-macroglobulin subfamily.

In Escherichia coli O157:H7, this protein is Alpha-2-macroglobulin homolog (yfaS).